An 83-amino-acid chain; its full sequence is Turripeptide Lol11.2 (83 aa).

The N-terminal stretch at 1-27 is a signal peptide; sequence MARLMMTVGCLIFIVVLLDMMVPVSNT.

This sequence belongs to the conopeptide I2-like superfamily. In terms of processing, contains 4 disulfide bonds. In terms of tissue distribution, expressed by the venom duct.

It localises to the secreted. Functionally, acts as a neurotoxin by inhibiting voltage-gated potassium channels (Kv). The polypeptide is Turripeptide Lol11.2 (Iotyrris olangoensis (Sea snail)).